Consider the following 572-residue polypeptide: Proline--tRNA ligase (572 aa).

The protein belongs to the class-II aminoacyl-tRNA synthetase family. ProS type 1 subfamily. In terms of assembly, homodimer.

Its subcellular location is the cytoplasm. The catalysed reaction is tRNA(Pro) + L-proline + ATP = L-prolyl-tRNA(Pro) + AMP + diphosphate. Its function is as follows. Catalyzes the attachment of proline to tRNA(Pro) in a two-step reaction: proline is first activated by ATP to form Pro-AMP and then transferred to the acceptor end of tRNA(Pro). As ProRS can inadvertently accommodate and process non-cognate amino acids such as alanine and cysteine, to avoid such errors it has two additional distinct editing activities against alanine. One activity is designated as 'pretransfer' editing and involves the tRNA(Pro)-independent hydrolysis of activated Ala-AMP. The other activity is designated 'posttransfer' editing and involves deacylation of mischarged Ala-tRNA(Pro). The misacylated Cys-tRNA(Pro) is not edited by ProRS. The chain is Proline--tRNA ligase from Buchnera aphidicola subsp. Acyrthosiphon pisum (strain APS) (Acyrthosiphon pisum symbiotic bacterium).